A 229-amino-acid polypeptide reads, in one-letter code: MDAVNACGAVAPSHVGRAALLRMLGAQPYVPVWHAMQRFTDVRDATAVDELWVVEHDPVFTLGQAGKLEHVLDPGEIPVVHVDRGGQVTYHGPGQLVVYPLLDLPRLGLGVRDYVYGIEQAVINTLAQWNILGERREHAPGVYVGGAKIAALGIRVRHGCSFHGVAFNVAMDLEPFHRIHPCGYRGLQVTSVLDLGGPSEMDTVAAALLAELARQFCFVLHPTSGWLSS.

The BPL/LPL catalytic domain maps to 45-220; sequence ATAVDELWVV…ELARQFCFVL (176 aa). Substrate contacts are provided by residues 84 to 91, 151 to 153, and 164 to 166; these read RGGQVTYH, ALG, and GVA. The active-site Acyl-thioester intermediate is Cys-182.

Belongs to the LipB family.

It localises to the cytoplasm. The enzyme catalyses octanoyl-[ACP] + L-lysyl-[protein] = N(6)-octanoyl-L-lysyl-[protein] + holo-[ACP] + H(+). It functions in the pathway protein modification; protein lipoylation via endogenous pathway; protein N(6)-(lipoyl)lysine from octanoyl-[acyl-carrier-protein]: step 1/2. Its function is as follows. Catalyzes the transfer of endogenously produced octanoic acid from octanoyl-acyl-carrier-protein onto the lipoyl domains of lipoate-dependent enzymes. Lipoyl-ACP can also act as a substrate although octanoyl-ACP is likely to be the physiological substrate. The chain is Octanoyltransferase from Xylella fastidiosa (strain 9a5c).